Consider the following 298-residue polypeptide: Enoyl-CoA hydratase AFT6-1 (298 aa).

Residues 1 to 39 are disordered; sequence MTYSTTKSVAMNPDEDAPPSDINSSGRLMSHSEVEPRGN.

Belongs to the enoyl-CoA hydratase/isomerase family.

It carries out the reaction a (3S)-3-hydroxyacyl-CoA = a (2E)-enoyl-CoA + H2O. The catalysed reaction is a 4-saturated-(3S)-3-hydroxyacyl-CoA = a (3E)-enoyl-CoA + H2O. It functions in the pathway mycotoxin biosynthesis. In terms of biological role, enoyl-CoA hydratase; part of the gene clusters that mediate the biosynthesis of the host-selective toxins (HSTs) AF-toxins responsible for Alternaria black spot of strawberry disease by the strawberry pathotype. AF-toxin I and III are valine derivatives of 2,3-dyhydroxy-isovaleric acid and 2-hydroxy-isovaleric acid respectively, while AF II is an isoleucine derivative of 2-hydroxy-valeric acid. These derivatives are bound to a 9,10-epoxy-8-hydroxy-9-methyl-decatrienoic acid (EDA) moiety. On cellular level, AF-toxin affects plasma membrane of susceptible cells and cause a sudden increase in loss of K(+) after a few minutes of toxin treatment. The aldo-keto reductase AFTS1 catalyzes the conversion of 2-keto-isovaleric acid (2-KIV) to 2-hydroxy-isovaleric acid (2-HIV) by reduction of its ketone to an alcohol. The acyl-CoA ligase AFT1, the hydrolase AFT2 and the enoyl-CoA hydratases AFT3 and AFT6, but also the polyketide synthase AFT9, the acyl-CoA dehydrogenase AFT10, the cytochrome P450 monooxygenase AFT11 and the oxidoreductase AFT12 are all involved in the biosynthesis of the AK-, AF- and ACT-toxin common EDA structural moiety. The exact function of each enzyme, and of additional enzymes identified within the AF-toxin clusters have still to be determined. The protein is Enoyl-CoA hydratase AFT6-1 of Alternaria alternata (Alternaria rot fungus).